The primary structure comprises 191 residues: Pyridoxal 5'-phosphate synthase subunit PdxT (191 aa).

52–54 (GES) is a binding site for L-glutamine. Catalysis depends on Cys81, which acts as the Nucleophile. Residues Arg108 and 136–137 (IR) contribute to the L-glutamine site. Residues His172 and Glu174 each act as charge relay system in the active site.

The protein belongs to the glutaminase PdxT/SNO family. In terms of assembly, in the presence of PdxS, forms a dodecamer of heterodimers. Only shows activity in the heterodimer.

The enzyme catalyses aldehydo-D-ribose 5-phosphate + D-glyceraldehyde 3-phosphate + L-glutamine = pyridoxal 5'-phosphate + L-glutamate + phosphate + 3 H2O + H(+). It catalyses the reaction L-glutamine + H2O = L-glutamate + NH4(+). The protein operates within cofactor biosynthesis; pyridoxal 5'-phosphate biosynthesis. In terms of biological role, catalyzes the hydrolysis of glutamine to glutamate and ammonia as part of the biosynthesis of pyridoxal 5'-phosphate. The resulting ammonia molecule is channeled to the active site of PdxS. This Actinobacillus pleuropneumoniae serotype 5b (strain L20) protein is Pyridoxal 5'-phosphate synthase subunit PdxT.